The following is a 141-amino-acid chain: MLMPKRTKYRKQMKGRNRGKAHRGNSIAFGDIAIKAIEHGRIDSRQIESARVAMTRHIKRAGKVWIRVFPDKPLTAKPLETRMGKGKGSVEKWVMNIKPGRIVYEMLGIEEGLAREALALSQSKLPFKTKIVTCESENEIY.

Residues 1–23 (MLMPKRTKYRKQMKGRNRGKAHR) form a disordered region.

Belongs to the universal ribosomal protein uL16 family. As to quaternary structure, part of the 50S ribosomal subunit.

In terms of biological role, binds 23S rRNA and is also seen to make contacts with the A and possibly P site tRNAs. This chain is Large ribosomal subunit protein uL16, found in Helicobacter pylori (strain J99 / ATCC 700824) (Campylobacter pylori J99).